Here is a 122-residue protein sequence, read N- to C-terminus: MARLNSKAVAAAVVLAAVVLMMAGREASAALSCGQVDSKLAPCVAYVTGRASSISKECCSGVQGLNGLARSSPDRKIACRCLKSLATSIKSINMGKVSGVPGKCGVSVPFPISMSTNCNNVN.

The signal sequence occupies residues 1 to 29 (MARLNSKAVAAAVVLAAVVLMMAGREASA). 4 cysteine pairs are disulfide-bonded: cysteine 33-cysteine 81, cysteine 43-cysteine 58, cysteine 59-cysteine 104, and cysteine 79-cysteine 118.

This sequence belongs to the plant LTP family. In terms of tissue distribution, expressed in phloem. Also detected in the epidermis near the vascular tissues in resistant plants infected by Hessian fly larvae.

Functionally, plant non-specific lipid-transfer proteins transfer phospholipids as well as galactolipids across membranes. May play a role in wax or cutin deposition in the cell walls of expanding epidermal cells and certain secretory tissues. The polypeptide is Probable non-specific lipid-transfer protein 3 (LTP3) (Triticum aestivum (Wheat)).